Consider the following 780-residue polypeptide: Gelsolin (780 aa).

Position 1 is an N-acetylmethionine; alternate (methionine 1). An N-terminal signal peptide occupies residues 1-25 (MAPYRSSLLCALLLLALCALSPSHA). Residues 51-174 (VVEHPEFLKA…YKKGGVASGF (124 aa)) form an actin-severing region. One copy of the Gelsolin-like 1 repeat lies at 74-155 (FDLVPVPPNL…EVQGFESSTF (82 aa)). A Phosphotyrosine modification is found at tyrosine 84. 6 residues coordinate Ca(2+): glycine 90, aspartate 91, glutamate 122, aspartate 134, glycine 139, and alanine 141. The interval 121 to 124 (DESG) is actin-actin interfilament contact point. 160 to 167 (KSGLKYKK) contributes to the a 1,2-diacyl-sn-glycero-3-phospho-(1D-myo-inositol-4,5-bisphosphate) binding site. Valine 170 is a Ca(2+) binding site. Position 186–194 (186–194 (RLFQVKGRR)) interacts with a 1,2-diacyl-sn-glycero-3-phospho-(1D-myo-inositol-4,5-bisphosphate). Residues 196–268 (VRATEVPVSW…SEEGGEPEAM (73 aa)) form a Gelsolin-like 2 repeat. Residues glycine 211 and aspartate 212 each contribute to the Ca(2+) site. Cysteines 213 and 226 form a disulfide. A Ca(2+)-binding site is contributed by glutamate 234. Residues 244 to 269 (GIRDNERSGRAQVHVSEEGGEPEAML) form a disordered region. Positions 284, 327, 328, and 352 each coordinate Ca(2+). Residues 315 to 387 (DENPFAQGAL…LPEGGETPLF (73 aa)) form a Gelsolin-like 3 repeat. A phosphotyrosine mark is found at tyrosine 407 and tyrosine 463. Residues 432–780 (AAQHGMDDDG…LDRALAELAA (349 aa)) form an actin-binding, Ca-sensitive region. The Gelsolin-like 4 repeat unit spans residues 453–534 (SNKVPVDPAT…VQGKEPAHLM (82 aa)). Residues glycine 469, aspartate 470, glutamate 500, aspartate 512, glycine 517, proline 519, and threonine 549 each coordinate Ca(2+). One copy of the Gelsolin-like 5 repeat lies at 575-640 (RAVEVMPKSG…EEGSEPDAFW (66 aa)). Residue lysine 582 is modified to N6-acetyllysine. Ca(2+) is bound by residues asparagine 589 and aspartate 590. Tyrosine 601 bears the Phosphotyrosine mark. Glutamate 612 lines the Ca(2+) pocket. Residue tyrosine 649 is modified to Phosphotyrosine. One copy of the Gelsolin-like 6 repeat lies at 679–754 (IEEVPGELMQ…VRQGFEPPSF (76 aa)). Positions 694, 695, and 717 each coordinate Ca(2+). Threonine 740 is modified (phosphothreonine).

The protein belongs to the villin/gelsolin family. In terms of assembly, binds to actin and to fibronectin. Identified in a complex composed of ACTA1, COBL, GSN and TMSB4X. Interacts with the inactive form of EIF2AK2/PKR. Interacts with FLII. Post-translationally, phosphorylated on tyrosine residues in vitro.

It is found in the cytoplasm. It localises to the cytoskeleton. The protein localises to the secreted. Calcium-regulated, actin-modulating protein that binds to the plus (or barbed) ends of actin monomers or filaments, preventing monomer exchange (end-blocking or capping). It can promote the assembly of monomers into filaments (nucleation) as well as sever filaments already formed. Plays a role in ciliogenesis. The polypeptide is Gelsolin (Gsn) (Mus musculus (Mouse)).